Here is a 449-residue protein sequence, read N- to C-terminus: Allantoinase (449 aa).

6 residues coordinate Zn(2+): His-59, His-61, Lys-146, His-182, His-238, and Asp-311. Lys-146 carries the post-translational modification N6-carboxylysine.

The protein belongs to the metallo-dependent hydrolases superfamily. Allantoinase family. Homotetramer. The cofactor is Zn(2+). Post-translationally, carboxylation allows a single lysine to coordinate two zinc ions.

The catalysed reaction is (S)-allantoin + H2O = allantoate + H(+). Its pathway is nitrogen metabolism; (S)-allantoin degradation; allantoate from (S)-allantoin: step 1/1. Functionally, catalyzes the conversion of allantoin (5-ureidohydantoin) to allantoic acid by hydrolytic cleavage of the five-member hydantoin ring. The protein is Allantoinase of Deinococcus geothermalis (strain DSM 11300 / CIP 105573 / AG-3a).